The primary structure comprises 327 residues: MPHLAELVANARAAIEDAQDVAALDLVRVEYLGKKGHLTLQMSSLRDLPVEERPAAGAVINQVKQEVQEALNIRKEKLETDLLNFRLAAEKIDVSLPGRRMENGGLHPVNRTIERIETFFGELGFSIESGPEIEDDYHNFDALNIPAHHPARADHDTFWFDAKRLLRTQTSGVQVRTMHSQQPPIRVIAPGRVYRNDYDQTHTPMFHQVEGLIIDRDISFTSLKGTLHDFLTNFFEEDLQVRFRPSYFPFTEPSAEVDVMGKNGKWLEVLGCGMVHPNVLHNVGLDPEIYSGFAFGMGVERLTMLRYGVTDLRAFFENDLRFLKQFK.

Mg(2+) is bound at residue E252.

This sequence belongs to the class-II aminoacyl-tRNA synthetase family. Phe-tRNA synthetase alpha subunit type 1 subfamily. In terms of assembly, tetramer of two alpha and two beta subunits. Mg(2+) is required as a cofactor.

The protein localises to the cytoplasm. The catalysed reaction is tRNA(Phe) + L-phenylalanine + ATP = L-phenylalanyl-tRNA(Phe) + AMP + diphosphate + H(+). The sequence is that of Phenylalanine--tRNA ligase alpha subunit from Photorhabdus laumondii subsp. laumondii (strain DSM 15139 / CIP 105565 / TT01) (Photorhabdus luminescens subsp. laumondii).